We begin with the raw amino-acid sequence, 145 residues long: Ribosome-binding factor A (145 aa).

Over residues 122–132 (KVQRDLESAPR) the composition is skewed to basic and acidic residues. The disordered stretch occupies residues 122–145 (KVQRDLESAPREDDEGEPDSSSRD).

It belongs to the RbfA family. In terms of assembly, monomer. Binds 30S ribosomal subunits, but not 50S ribosomal subunits or 70S ribosomes.

It is found in the cytoplasm. One of several proteins that assist in the late maturation steps of the functional core of the 30S ribosomal subunit. Associates with free 30S ribosomal subunits (but not with 30S subunits that are part of 70S ribosomes or polysomes). Required for efficient processing of 16S rRNA. May interact with the 5'-terminal helix region of 16S rRNA. This is Ribosome-binding factor A from Methylorubrum extorquens (strain PA1) (Methylobacterium extorquens).